A 448-amino-acid polypeptide reads, in one-letter code: Senescence/dehydration-associated protein At4g35985, chloroplastic (448 aa).

The segment at 1–36 (MECSATPPKLYPTVDTSTTVAPLPKSSSSSSSTNNN) is disordered. The N-terminal 56 residues, 1-56 (MECSATPPKLYPTVDTSTTVAPLPKSSSSSSSTNNNNLYPSINVNDLVNNIFPDPT), are a transit peptide targeting the chloroplast. The span at 26-36 (SSSSSSSTNNN) shows a compositional bias: low complexity. Residues 248–416 (IAAGSGQLIK…AWTVFKIRQA (169 aa)) enclose the Senescence domain. Residues 422 to 448 (AMKPSSLAKTVVKTAAKERKKGKKSSK) are disordered. Residues 439–448 (ERKKGKKSSK) show a composition bias toward basic residues.

As to expression, expressed in leaves (especially in midribs and trichomes), apical meristemic regions, stems, roots and flowers.

It localises to the plastid. Its subcellular location is the chloroplast. The chain is Senescence/dehydration-associated protein At4g35985, chloroplastic from Arabidopsis thaliana (Mouse-ear cress).